Here is an 89-residue protein sequence, read N- to C-terminus: Small ribosomal subunit protein uS15 (89 aa).

This sequence belongs to the universal ribosomal protein uS15 family. As to quaternary structure, part of the 30S ribosomal subunit. Forms a bridge to the 50S subunit in the 70S ribosome, contacting the 23S rRNA.

Its function is as follows. One of the primary rRNA binding proteins, it binds directly to 16S rRNA where it helps nucleate assembly of the platform of the 30S subunit by binding and bridging several RNA helices of the 16S rRNA. Functionally, forms an intersubunit bridge (bridge B4) with the 23S rRNA of the 50S subunit in the ribosome. The chain is Small ribosomal subunit protein uS15 from Pectobacterium carotovorum subsp. carotovorum (strain PC1).